Here is a 438-residue protein sequence, read N- to C-terminus: tRNA-dihydrouridine(16/17) synthase [NAD(P)(+)]-like (438 aa).

Residues 23–25 and Gln79 contribute to the FMN site; that span reads PMV. Residue Cys108 is the Proton donor of the active site. Residues Lys147, His175, 208–210, and 232–233 contribute to the FMN site; these read NGN and AE. The segment at 343-387 is disordered; the sequence is GPKEGSKENSSGRSKRALEEEEGSMEGLSKNKLKKQLRNPHKTFD. A compositionally biased stretch (basic residues) spans 373-383; sequence NKLKKQLRNPH.

This sequence belongs to the Dus family. Dus1 subfamily. It depends on FMN as a cofactor.

The protein localises to the cytoplasm. Its subcellular location is the nucleus. It catalyses the reaction 5,6-dihydrouridine(16) in tRNA + NADP(+) = uridine(16) in tRNA + NADPH + H(+). It carries out the reaction 5,6-dihydrouridine(16) in tRNA + NAD(+) = uridine(16) in tRNA + NADH + H(+). The catalysed reaction is 5,6-dihydrouridine(17) in tRNA + NAD(+) = uridine(17) in tRNA + NADH + H(+). The enzyme catalyses 5,6-dihydrouridine(17) in tRNA + NADP(+) = uridine(17) in tRNA + NADPH + H(+). In terms of biological role, catalyzes the synthesis of dihydrouridine, a modified base found in the D-loop of most tRNAs. Specifically modifies U16 and U17 in cytoplasmic tRNAs. Affects the level of some mature tRNA and thereby the total cellular translation. This chain is tRNA-dihydrouridine(16/17) synthase [NAD(P)(+)]-like (Dus1l), found in Rattus norvegicus (Rat).